The following is a 2170-amino-acid chain: ATP-binding cassette sub-family A member 7 (2170 aa).

A helical membrane pass occupies residues 22-42 (PIQLVVELLWPLFLFFILVAV). The Extracellular segment spans residues 43-547 (RHSHPPLEHH…DVFLRVLSRS (505 aa)). An intrachain disulfide couples C75 to C222. A glycan (N-linked (GlcNAc...) asparagine) is linked at N309. Helical transmembrane passes span 548–568 (LPLF…KAVV), 591–611 (LGWF…LVLV), 624–644 (VVVF…SFLL), 653–673 (LAAA…VLCV), 679–699 (LPLG…GFGC), and 733–753 (AFLL…EAVC). An ABC transporter 1 domain is found at 805 to 1036 (VSIRGLKKHF…LGCGYYLTLV (232 aa)). 839-846 (GHNGAGKT) is a binding site for ATP. A helical transmembrane segment spans residues 847 to 867 (TTLSILSGLFPPSSGSASILG). A disordered region spans residues 1044-1086 (THDLKGDTEDPRREKKSGSEGKTADTVLTRDGPHRSSQVPAPD). Residues 1045-1066 (HDLKGDTEDPRREKKSGSEGKT) are compositionally biased toward basic and acidic residues. A helical transmembrane segment spans residues 1257-1277 (IVLPALFVGLALFFTLIVPPF). The Extracellular segment spans residues 1278–1562 (GQYPPLQLSP…TLIASSVDVL (285 aa)). Residues C1370 and C1384 are joined by a disulfide bond. The next 6 helical transmembrane spans lie at 1563–1583 (VSIC…LVLI), 1609–1629 (FLWD…IFLA), 1646–1666 (LLLL…SFFF), 1674–1694 (VVLT…TFVL), 1708–1728 (ILKQ…LIDM), and 1754–1774 (IIGK…LITL). The 233-residue stretch at 1818–2050 (LVLRDLTKVY…FGAGHTLTLR (233 aa)) folds into the ABC transporter 2 domain. Residue 1852–1859 (GVNGAGKT) coordinates ATP. Positions 2129–2170 (QGEEEEGSGQETETREVSTPGLQHPKRVSRFLEDPSSVETVI) are disordered.

It belongs to the ABC transporter superfamily. ABCA family. N-glycosylated. Expressed in blood cells. Also detected in brain and ovary tissues (at protein level). Expressed in platelet.

It is found in the cell membrane. Its subcellular location is the golgi apparatus membrane. The protein localises to the early endosome membrane. The protein resides in the cell projection. It localises to the ruffle membrane. It is found in the phagocytic cup. Its subcellular location is the cytoplasm. ATP-binding cassette (ABC) transporter that plays a role in lipid homeostasis and macrophage-mediated phagocytosis. Binds APOA1 and may function in apolipoprotein-mediated phospholipid efflux from cells. May also mediate cholesterol efflux. May regulate cellular ceramide homeostasis during keratinocyte differentiation. Involved in lipid raft organization and CD1D localization on thymocytes and antigen-presenting cells, which plays an important role in natural killer T-cell development and activation. Plays a role in phagocytosis of apoptotic cells by macrophages. Macrophage phagocytosis is stimulated by APOA1 or APOA2, probably by stabilization of ABCA7. Also involved in phagocytic clearance of amyloid-beta by microglia cells and macrophages. Further limits amyloid-beta production by playing a role in the regulation of amyloid-beta A4 precursor protein (APP) endocytosis and/or processing. The chain is ATP-binding cassette sub-family A member 7 (Abca7) from Rattus norvegicus (Rat).